The primary structure comprises 376 residues: Alcohol dehydrogenase class-3 (376 aa).

Residues C47, H69, C99, C102, C105, C113, and C176 each contribute to the Zn(2+) site.

It belongs to the zinc-containing alcohol dehydrogenase family. Class-III subfamily. Homodimer. It depends on Zn(2+) as a cofactor. In terms of tissue distribution, expressed in the skeletal muscle, heart, gill filaments and liver, with highest levels in the kidney.

The protein localises to the cytoplasm. It catalyses the reaction a primary alcohol + NAD(+) = an aldehyde + NADH + H(+). The catalysed reaction is a secondary alcohol + NAD(+) = a ketone + NADH + H(+). It carries out the reaction S-(hydroxymethyl)glutathione + NADP(+) = S-formylglutathione + NADPH + H(+). The enzyme catalyses S-(hydroxymethyl)glutathione + NAD(+) = S-formylglutathione + NADH + H(+). It catalyses the reaction S-nitrosoglutathione + NADH + H(+) = S-(hydroxysulfenamide)glutathione + NAD(+). Its function is as follows. Class-III ADH is remarkably ineffective in oxidizing ethanol, but it readily catalyzes the oxidation of long-chain primary alcohols and the oxidation of S-(hydroxymethyl) glutathione. Also acts as a S-nitroso-glutathione reductase by catalyzing the NADH-dependent reduction of S-nitrosoglutathione, thereby regulating protein S-nitrosylation. This Sparus aurata (Gilthead sea bream) protein is Alcohol dehydrogenase class-3.